Consider the following 250-residue polypeptide: 5'-nucleotidase SurE (250 aa).

A divalent metal cation is bound by residues aspartate 9, aspartate 10, serine 40, and asparagine 92.

Belongs to the SurE nucleotidase family. A divalent metal cation is required as a cofactor.

It localises to the cytoplasm. It carries out the reaction a ribonucleoside 5'-phosphate + H2O = a ribonucleoside + phosphate. In terms of biological role, nucleotidase that shows phosphatase activity on nucleoside 5'-monophosphates. In Idiomarina loihiensis (strain ATCC BAA-735 / DSM 15497 / L2-TR), this protein is 5'-nucleotidase SurE.